The primary structure comprises 162 residues: Tegument protein BLRF2 (162 aa).

Residues 12-43 (VKAVDMSMEDMAARLARLESENKALKQQVLRG) are a coiled coil. Positions 118–162 (SMLGAKGQPSPGEGTRPRESNDPNATRRARSRSRGREAKKVQISD) are disordered. Basic and acidic residues predominate over residues 151–162 (RGREAKKVQISD).

This sequence belongs to the herpesviridae BLRF2 family. In terms of assembly, homooligomer; homooligomerizes and binds double-stranded DNA (dsDNA) cooperatively. Interacts with host CGAS.

Its subcellular location is the virion tegument. It localises to the host cytoplasm. In terms of biological role, plays a role in the inhibition of host innate immune system by targeting the CGAS enzymatic activity which is the principal cytosolic DNA sensor that detects invading viral DNA. Acts by inhibiting CGAS-DNA phase separation: directly binds double-stranded DNA (dsDNA) in a length dependent but sequence independent manner and is able to form DNA-induced phase separation in infected cells. DNA phase separation of ORF52 mediates disruption of liquid-like droplets in which CGAS is activated, thereby preventing CGAS activity. In Homo sapiens (Human), this protein is Tegument protein BLRF2.